The chain runs to 340 residues: GTP 3',8-cyclase (340 aa).

The region spanning 20–246 (RFQRQYTYLR…PKAVNDGPAK (227 aa)) is the Radical SAM core domain. Arg29 contributes to the GTP binding site. Residues Cys36 and Cys40 each coordinate [4Fe-4S] cluster. Tyr42 is a binding site for S-adenosyl-L-methionine. Residue Cys43 coordinates [4Fe-4S] cluster. Arg79 contacts GTP. Position 83 (Gly83) interacts with S-adenosyl-L-methionine. Thr110 lines the GTP pocket. Ser134 provides a ligand contact to S-adenosyl-L-methionine. Residue Lys171 participates in GTP binding. Met205 contributes to the S-adenosyl-L-methionine binding site. [4Fe-4S] cluster is bound by residues Cys268 and Cys271. Residue 273–275 (RLR) participates in GTP binding. Position 285 (Cys285) interacts with [4Fe-4S] cluster.

It belongs to the radical SAM superfamily. MoaA family. In terms of assembly, monomer and homodimer. It depends on [4Fe-4S] cluster as a cofactor.

The enzyme catalyses GTP + AH2 + S-adenosyl-L-methionine = (8S)-3',8-cyclo-7,8-dihydroguanosine 5'-triphosphate + 5'-deoxyadenosine + L-methionine + A + H(+). Its pathway is cofactor biosynthesis; molybdopterin biosynthesis. Its function is as follows. Catalyzes the cyclization of GTP to (8S)-3',8-cyclo-7,8-dihydroguanosine 5'-triphosphate. The protein is GTP 3',8-cyclase of Haemophilus ducreyi (strain 35000HP / ATCC 700724).